A 315-amino-acid polypeptide reads, in one-letter code: Probable cytosolic iron-sulfur protein assembly protein CIAO1 homolog (315 aa).

WD repeat units follow at residues 11–50 (GHED…WVCK), 56–95 (GHQR…FESC), 100–139 (GHEN…EFEC), 145–188 (CHSQ…CTLD), 189–229 (KHAS…RSWE), 236–275 (RHPR…CSWR), and 283–315 (AHSQ…WQID).

The protein belongs to the WD repeat CIA1 family.

In terms of biological role, essential component of the cytosolic iron-sulfur (Fe/S) protein assembly machinery. Required for the maturation of extramitochondrial Fe/S proteins. This chain is Probable cytosolic iron-sulfur protein assembly protein CIAO1 homolog, found in Ixodes scapularis (Black-legged tick).